The chain runs to 282 residues: Pantothenate synthetase (282 aa).

Residue 30–37 participates in ATP binding; it reads MGYLHEGH. Histidine 37 functions as the Proton donor in the catalytic mechanism. Glutamine 61 contributes to the (R)-pantoate binding site. Glutamine 61 lines the beta-alanine pocket. 147-150 provides a ligand contact to ATP; sequence GMKD. Residue glutamine 153 participates in (R)-pantoate binding. ATP is bound by residues valine 176 and 184-187; that span reads KSSR.

The protein belongs to the pantothenate synthetase family. Homodimer.

It localises to the cytoplasm. It catalyses the reaction (R)-pantoate + beta-alanine + ATP = (R)-pantothenate + AMP + diphosphate + H(+). It functions in the pathway cofactor biosynthesis; (R)-pantothenate biosynthesis; (R)-pantothenate from (R)-pantoate and beta-alanine: step 1/1. Functionally, catalyzes the condensation of pantoate with beta-alanine in an ATP-dependent reaction via a pantoyl-adenylate intermediate. The polypeptide is Pantothenate synthetase (Bacillus mycoides (strain KBAB4) (Bacillus weihenstephanensis)).